The sequence spans 476 residues: MEYEIVIGLEVHAELATKTKMYCGCTAEFGGQPNTHVCPVCMGLPGALPHINKRAVDYGIKAGLALNCSITHIGRMDRKHIFYPDNSRNYQITQDELPLCTNGYIEIELEDGSKKKIGVERIHIEEDAGKLLHTNAGTLVDFNRCGVPLAEIVSKPDMRSPREAVTYLEELKSILSCVGVSDCKMEEGSLRCDANISVMKKGAKEFGVRTEIKNMNSFKAVEKALNYEYERHIKAIESGEKLTQETRRWDDAKNETAPMRSKEEANDYRYFPEGDLVTLNIDDEWIESIRKTIPELPYQKRERFIKEFGIPKYDASVLTLTMSMADFFEKTAKISGDAKSASNWLMGDISKIMKENYVWIEDLKFTPEQLSELIKLINEGTVSNAIGKKVIIKMFETGKSPKNIIEEEGLIQNSNEDEILNIVKEVLSENEKSIEDYKNGKNRVVGFLIGLVMKKTKGKANPKIVNKLMIDELNKQ.

The protein belongs to the GatB/GatE family. GatB subfamily. As to quaternary structure, heterotrimer of A, B and C subunits.

It carries out the reaction L-glutamyl-tRNA(Gln) + L-glutamine + ATP + H2O = L-glutaminyl-tRNA(Gln) + L-glutamate + ADP + phosphate + H(+). The enzyme catalyses L-aspartyl-tRNA(Asn) + L-glutamine + ATP + H2O = L-asparaginyl-tRNA(Asn) + L-glutamate + ADP + phosphate + 2 H(+). Allows the formation of correctly charged Asn-tRNA(Asn) or Gln-tRNA(Gln) through the transamidation of misacylated Asp-tRNA(Asn) or Glu-tRNA(Gln) in organisms which lack either or both of asparaginyl-tRNA or glutaminyl-tRNA synthetases. The reaction takes place in the presence of glutamine and ATP through an activated phospho-Asp-tRNA(Asn) or phospho-Glu-tRNA(Gln). This Clostridium acetobutylicum (strain ATCC 824 / DSM 792 / JCM 1419 / IAM 19013 / LMG 5710 / NBRC 13948 / NRRL B-527 / VKM B-1787 / 2291 / W) protein is Aspartyl/glutamyl-tRNA(Asn/Gln) amidotransferase subunit B 1 (gatB1).